Reading from the N-terminus, the 506-residue chain is MKEYQVYLERARSRQQDFLYPLLFREYIYGLAYSHNLNRSIFLENVGYDNKYSLLIVKRLITRMYQQNHLIISANDSNKNTLGGYNPILDSQIISEGFAIVVEIPFLRQLSSSLEEEKILQSYKNLRSIHSIFPFLEDKFTYLHYVSDIRIPYPIHLEILVQILRYWVKDAPFFHLLRLFLYNFCNWNSFFTTKKWISTFSKSNPRLFLFLHNFYVCEYESIFVFLRTKSSHLRLKSFSVFFERIFFYAKREHLVKVFSKDFSYTLTFLKDPNIHYVRYQGKCILASKNAPFLMNKWKHYFIHLWQCFFDLWSQPRMININPLSEHSFQLLGYFLNVRLNRSVVRSQMLQNTFLIEMVIQNLDIIVPIIPLIRSLAKAKFCNILGEPISKPVWADSSDFDIIDRFLRICRNLSHYYNGSSKKKSLYRIKYILRLSCIKTLACKHKSTVRAFLKRSGSEELLQEFFTEEQEILSFIFPRDSSTWQRLHRNRIWYLDILFSNDLVHDE.

Belongs to the intron maturase 2 family. MatK subfamily.

It is found in the plastid. The protein localises to the chloroplast. In terms of biological role, usually encoded in the trnK tRNA gene intron. Probably assists in splicing its own and other chloroplast group II introns. The sequence is that of Maturase K from Lathyrus tingitanus (Tangier pea).